A 116-amino-acid chain; its full sequence is MVGGEAAAAVEELISGVRRATDFAEQFRSYSESEKQWKARMEFILRHLPDYRDPPDGGGRLDQLLSLSMVWANHLFLGCSYNKDLLDKVMEMADGIEVEDLPQFTTRSELMKKHQS.

Residue M1 is modified to N-acetylmethionine. Residues 24–116 enclose the XRN2-binding (XTBD) domain; the sequence is AEQFRSYSES…RSELMKKHQS (93 aa).

This sequence belongs to the CARF family. As to quaternary structure, interacts with XRN2; the interaction is direct.

This is CDKN2AIP N-terminal-like protein (CDKN2AIPNL) from Bos taurus (Bovine).